We begin with the raw amino-acid sequence, 274 residues long: 2,3,4,5-tetrahydropyridine-2,6-dicarboxylate N-succinyltransferase (274 aa).

The substrate site is built by Arg-107 and Asp-144.

It belongs to the transferase hexapeptide repeat family. As to quaternary structure, homotrimer.

Its subcellular location is the cytoplasm. It carries out the reaction (S)-2,3,4,5-tetrahydrodipicolinate + succinyl-CoA + H2O = (S)-2-succinylamino-6-oxoheptanedioate + CoA. It functions in the pathway amino-acid biosynthesis; L-lysine biosynthesis via DAP pathway; LL-2,6-diaminopimelate from (S)-tetrahydrodipicolinate (succinylase route): step 1/3. This is 2,3,4,5-tetrahydropyridine-2,6-dicarboxylate N-succinyltransferase from Cereibacter sphaeroides (strain ATCC 17023 / DSM 158 / JCM 6121 / CCUG 31486 / LMG 2827 / NBRC 12203 / NCIMB 8253 / ATH 2.4.1.) (Rhodobacter sphaeroides).